A 116-amino-acid polypeptide reads, in one-letter code: Putative serine proteinase inhibitor 2 homolog first part (116 aa).

It belongs to the serpin family. Poxviruses subfamily.

The sequence is that of Putative serine proteinase inhibitor 2 homolog first part from Vaccinia virus (strain Copenhagen) (VACV).